We begin with the raw amino-acid sequence, 324 residues long: Bis(5'-nucleosyl)-tetraphosphatase, symmetrical (324 aa).

The tract at residues proline 269–glutamate 324 is disordered. The span at alanine 282 to glycine 297 shows a compositional bias: basic residues. Over residues glycine 298–glycine 309 the composition is skewed to gly residues. Residues asparagine 310–glutamate 324 are compositionally biased toward low complexity.

The protein belongs to the Ap4A hydrolase family.

The enzyme catalyses P(1),P(4)-bis(5'-adenosyl) tetraphosphate + H2O = 2 ADP + 2 H(+). Functionally, hydrolyzes diadenosine 5',5'''-P1,P4-tetraphosphate to yield ADP. This Xanthomonas campestris pv. campestris (strain ATCC 33913 / DSM 3586 / NCPPB 528 / LMG 568 / P 25) protein is Bis(5'-nucleosyl)-tetraphosphatase, symmetrical.